The chain runs to 431 residues: 3-phosphoshikimate 1-carboxyvinyltransferase (431 aa).

Positions 21, 22, and 26 each coordinate 3-phosphoshikimate. Lysine 21 contributes to the phosphoenolpyruvate binding site. Positions 94 and 122 each coordinate phosphoenolpyruvate. Positions 167, 169, 315, and 342 each coordinate 3-phosphoshikimate. Residue glutamine 169 coordinates phosphoenolpyruvate. The active-site Proton acceptor is aspartate 315. Phosphoenolpyruvate is bound by residues arginine 346 and arginine 388.

Belongs to the EPSP synthase family. Monomer.

The protein localises to the cytoplasm. The catalysed reaction is 3-phosphoshikimate + phosphoenolpyruvate = 5-O-(1-carboxyvinyl)-3-phosphoshikimate + phosphate. It participates in metabolic intermediate biosynthesis; chorismate biosynthesis; chorismate from D-erythrose 4-phosphate and phosphoenolpyruvate: step 6/7. Its function is as follows. Catalyzes the transfer of the enolpyruvyl moiety of phosphoenolpyruvate (PEP) to the 5-hydroxyl of shikimate-3-phosphate (S3P) to produce enolpyruvyl shikimate-3-phosphate and inorganic phosphate. The chain is 3-phosphoshikimate 1-carboxyvinyltransferase from Pelotomaculum thermopropionicum (strain DSM 13744 / JCM 10971 / SI).